The sequence spans 78 residues: Putative membrane protein insertion efficiency factor (78 aa).

It belongs to the UPF0161 family.

It localises to the cell membrane. Its function is as follows. Could be involved in insertion of integral membrane proteins into the membrane. The chain is Putative membrane protein insertion efficiency factor from Bacillus mycoides (strain KBAB4) (Bacillus weihenstephanensis).